The sequence spans 110 residues: Large ribosomal subunit protein uL22 (110 aa).

Belongs to the universal ribosomal protein uL22 family. Part of the 50S ribosomal subunit.

Its function is as follows. This protein binds specifically to 23S rRNA; its binding is stimulated by other ribosomal proteins, e.g. L4, L17, and L20. It is important during the early stages of 50S assembly. It makes multiple contacts with different domains of the 23S rRNA in the assembled 50S subunit and ribosome. The globular domain of the protein is located near the polypeptide exit tunnel on the outside of the subunit, while an extended beta-hairpin is found that lines the wall of the exit tunnel in the center of the 70S ribosome. The sequence is that of Large ribosomal subunit protein uL22 from Haemophilus influenzae (strain 86-028NP).